The chain runs to 146 residues: Large ribosomal subunit protein uL15 (146 aa).

The segment at 1–56 is disordered; the sequence is MKLHELRAAEGANKASKRVGRGTGSGLGKTSGRGQNGQNSRSGGGVRPGFEGGQMP. Composition is skewed to gly residues over residues 21-35 and 42-52; these read RGTG…GRGQ and SGGGVRPGFEG.

This sequence belongs to the universal ribosomal protein uL15 family. Part of the 50S ribosomal subunit.

Binds to the 23S rRNA. The polypeptide is Large ribosomal subunit protein uL15 (Clostridium botulinum (strain Okra / Type B1)).